Here is a 125-residue protein sequence, read N- to C-terminus: SOSS complex subunit C homolog B (125 aa).

Disordered stretches follow at residues 44-73 (PAPQ…RAAF) and 105-125 (PATP…NNPK).

Belongs to the SOSS-C family.

In Drosophila willistoni (Fruit fly), this protein is SOSS complex subunit C homolog B.